Here is an 832-residue protein sequence, read N- to C-terminus: Translation initiation factor IF-2 (832 aa).

Residues 1–249 form a disordered region; it reads MSDDNDKPRT…GGGSSAPREK (249 aa). A compositionally biased stretch (pro residues) spans 53 to 71; it reads TPAPAPEPAPEPAPAPAPA. The span at 89–144 shows a compositional bias: basic and acidic residues; it reads PQERVARLQREAEEERLKLAEDARKRDDQKAKQNADDEKKRQEENKKAEEEAEKQA. The segment covering 145–156 has biased composition (low complexity); it reads AAEAEAAAAAEA. Residues 180-200 are compositionally biased toward basic and acidic residues; it reads PEPKRPEKKKEEKKPARGGAK. Residues 333-503 form the tr-type G domain; that stretch reads PRPPVVTIMG…ELQAELLELK (171 aa). A G1 region spans residues 342–349; the sequence is GHVDHGKT. 342 to 349 contributes to the GTP binding site; sequence GHVDHGKT. The segment at 367-371 is G2; sequence GITQH. Residues 389–392 form a G3 region; it reads DTPG. Residues 389-393 and 443-446 contribute to the GTP site; these read DTPGH and NKCD. Residues 443 to 446 are G4; it reads NKCD. A G5 region spans residues 479–481; it reads SAT.

Belongs to the TRAFAC class translation factor GTPase superfamily. Classic translation factor GTPase family. IF-2 subfamily.

The protein resides in the cytoplasm. In terms of biological role, one of the essential components for the initiation of protein synthesis. Protects formylmethionyl-tRNA from spontaneous hydrolysis and promotes its binding to the 30S ribosomal subunits. Also involved in the hydrolysis of GTP during the formation of the 70S ribosomal complex. In Erythrobacter litoralis (strain HTCC2594), this protein is Translation initiation factor IF-2.